A 338-amino-acid chain; its full sequence is Methionine synthase (338 aa).

Residues H210, C212, E234, and C294 each coordinate Zn(2+).

Belongs to the archaeal MetE family. Requires Zn(2+) as cofactor.

The protein operates within amino-acid biosynthesis; L-methionine biosynthesis via de novo pathway. Catalyzes the transfer of a methyl group to L-homocysteine resulting in methionine formation. The physiological methyl donor is unknown. The sequence is that of Methionine synthase from Pyrococcus horikoshii (strain ATCC 700860 / DSM 12428 / JCM 9974 / NBRC 100139 / OT-3).